A 165-amino-acid chain; its full sequence is Minor capsid protein VP2 (165 aa).

Belongs to the sapovirus VP2 family. As to quaternary structure, homooligomer. The portal-like structure consists in 12 copies of VP2. Interacts with capsid protein VP1.

It localises to the virion. It is found in the host cytoplasm. Functionally, minor structural protein that forms a portal-like structure at a unique three-fold axis of symmetry, following binding to the host receptor. The channel formed by VP2 may allow the delivery of the viral genome through the host endosomal membrane. The polypeptide is Minor capsid protein VP2 (Homo sapiens (Human)).